The chain runs to 214 residues: Probable nicotinate-nucleotide adenylyltransferase (214 aa).

The protein belongs to the NadD family.

It carries out the reaction nicotinate beta-D-ribonucleotide + ATP + H(+) = deamido-NAD(+) + diphosphate. It functions in the pathway cofactor biosynthesis; NAD(+) biosynthesis; deamido-NAD(+) from nicotinate D-ribonucleotide: step 1/1. Catalyzes the reversible adenylation of nicotinate mononucleotide (NaMN) to nicotinic acid adenine dinucleotide (NaAD). This Buchnera aphidicola subsp. Acyrthosiphon pisum (strain 5A) protein is Probable nicotinate-nucleotide adenylyltransferase.